A 205-amino-acid polypeptide reads, in one-letter code: Glycerol-3-phosphate acyltransferase (205 aa).

Helical transmembrane passes span 13–33 (LLALAALIGYLLGSIPFGLIL), 68–88 (LLLDALKGTAAVLVANALWGY), 90–110 (ASLVAGFFAFLGHLFPVWLGF), 120–140 (IGVLLGAAPLMMLAFALIWLA), and 147–167 (YSSLSALLAMLIIPVALWVLG).

The protein belongs to the PlsY family. In terms of assembly, probably interacts with PlsX.

The protein localises to the cell inner membrane. The enzyme catalyses an acyl phosphate + sn-glycerol 3-phosphate = a 1-acyl-sn-glycero-3-phosphate + phosphate. It participates in lipid metabolism; phospholipid metabolism. Functionally, catalyzes the transfer of an acyl group from acyl-phosphate (acyl-PO(4)) to glycerol-3-phosphate (G3P) to form lysophosphatidic acid (LPA). This enzyme utilizes acyl-phosphate as fatty acyl donor, but not acyl-CoA or acyl-ACP. This Agrobacterium fabrum (strain C58 / ATCC 33970) (Agrobacterium tumefaciens (strain C58)) protein is Glycerol-3-phosphate acyltransferase.